The primary structure comprises 364 residues: Histidinol-phosphate aminotransferase 1 (364 aa).

Residue lysine 211 is modified to N6-(pyridoxal phosphate)lysine.

This sequence belongs to the class-II pyridoxal-phosphate-dependent aminotransferase family. Histidinol-phosphate aminotransferase subfamily. In terms of assembly, homodimer. The cofactor is pyridoxal 5'-phosphate.

The catalysed reaction is L-histidinol phosphate + 2-oxoglutarate = 3-(imidazol-4-yl)-2-oxopropyl phosphate + L-glutamate. It functions in the pathway amino-acid biosynthesis; L-histidine biosynthesis; L-histidine from 5-phospho-alpha-D-ribose 1-diphosphate: step 7/9. In Legionella pneumophila (strain Lens), this protein is Histidinol-phosphate aminotransferase 1.